A 318-amino-acid chain; its full sequence is Taste receptor type 2 member 60 (318 aa).

Topologically, residues methionine 1–valine 7 are extracellular. A helical membrane pass occupies residues leucine 8–arginine 28. Over leucine 29–alanine 40 the chain is Cytoplasmic. Residues alanine 41–serine 61 traverse the membrane as a helical segment. Over leucine 62 to proline 88 the chain is Extracellular. A helical membrane pass occupies residues tyrosine 89–tryptophan 109. Residues phenylalanine 110–proline 128 lie on the Cytoplasmic side of the membrane. A helical transmembrane segment spans residues valine 129–valine 149. Topologically, residues glycine 150–asparagine 183 are extracellular. Asparagine 179 is a glycosylation site (N-linked (GlcNAc...) asparagine). Residues serine 184–methionine 204 traverse the membrane as a helical segment. Topologically, residues proline 205–phenylalanine 234 are cytoplasmic. A helical membrane pass occupies residues arginine 235–leucine 255. At phenylalanine 256–valine 264 the chain is on the extracellular side. A helical transmembrane segment spans residues phenylalanine 265 to isoleucine 285. Topologically, residues tyrosine 286–proline 318 are cytoplasmic.

It belongs to the G-protein coupled receptor T2R family.

The protein localises to the membrane. Functionally, receptor that may play a role in the perception of bitterness and is gustducin-linked. May play a role in sensing the chemical composition of the gastrointestinal content. The activity of this receptor may stimulate alpha gustducin, mediate PLC-beta-2 activation and lead to the gating of TRPM5. In Gorilla gorilla gorilla (Western lowland gorilla), this protein is Taste receptor type 2 member 60 (TAS2R60).